Consider the following 514-residue polypeptide: Cytochrome P450 monooxygenase nodJ (514 aa).

The chain crosses the membrane as a helical span at residues 2–24 (ELIVIIITLAFCILLYGTRWRAA). 3 N-linked (GlcNAc...) asparagine glycosylation sites follow: Asn144, Asn245, and Asn416. Cys432 lines the heme pocket.

This sequence belongs to the cytochrome P450 family. Heme serves as cofactor.

It is found in the membrane. Its pathway is secondary metabolite biosynthesis. Functionally, cytochrome P450 monooxygenase; part of the gene cluster that mediates the biosynthesis of the indole diterpenes nodulisporic acids (NA). Nodulisporic acid A (NAA) and its chemically modified derivatives are of particular significance because of their highly potent insecticidal activity against blood-feeding arthropods and lack of observable adverse effects on mammals, in particular the tremogenicity associated with the paspaline-derived IDTs is not observed. The geranylgeranyl diphosphate (GGPP) synthase ggs1, localized outside of the cluster, is proposed to catalyze the first step in nodulisporic acid biosynthesis via conversion of farnesyl pyrophosphate and isopentyl pyrophosphate into geranylgeranyl pyrophosphate (GGPP). Condensation of indole-3-glycerol phosphate with GGPP by the prenyl transferase nodC then forms 3-geranylgeranylindole (3-GGI). Epoxidation by the FAD-dependent monooxygenase nodM leads to a single-epoxidized-GGI that is substrate of the terpene cyclase nodB for cyclization to yield emindole SB. The terminal methyl carbon, C28, of emindole SB is then oxidized by the cytochrome P450 monooxygenase nodW to produce nodulisporic acid F (NAF), the pentacyclic core of NAA. NAF is converted to nodulisporic acid E (NAE) via prenylation. This step is probably performed by one of the indole diterpene prenyltransferases nodD1 or nodD2. Several oxidation steps performed by the FAD-linked oxidoreductase nodO and one of the cytochrome P450 monooxygenase nodR, nodX or nodZ further convert NAE to nodulisporic acid D (NAD). NAD is substrate of cytochrome P450 monooxygenase nodJ to produce the precursor of nodulisporic acid C (NAC), converted to NAC by one of the indole diterpene prenyltransferases nodD1 or nodD2. The FAD-dependent monooxygenase nodY2 then oxidizes NAC to nodulisporic acid B (NAB). Finally NAB is converted to NAA by one of the cytochrome P450 monooxygenases nodR, nodX or nodZ. This Hypoxylon pulicicidum protein is Cytochrome P450 monooxygenase nodJ.